A 210-amino-acid polypeptide reads, in one-letter code: High mobility group protein B2 (210 aa).

Residue K3 is modified to N6-acetyllysine. Residues 9–79 constitute a DNA-binding region (HMG box 1); sequence PRGKMSSYAF…RYDREMKNYV (71 aa). C23 carries the post-translational modification Cysteine sulfonic acid (-SO3H); alternate. C23 and C45 form a disulfide bridge. N6-acetyllysine is present on K30. S35 is modified (phosphoserine). K43 is subject to N6-acetyllysine. Residue C45 is modified to Cysteine sulfonic acid (-SO3H); alternate. Over residues 51 to 76 the composition is skewed to basic and acidic residues; the sequence is TMSAKEKSKFEDLAKSDKARYDREMK. Residues 51 to 102 are disordered; it reads TMSAKEKSKFEDLAKSDKARYDREMKNYVPPKGDKKGKKKDPNAPKRPPSAF. K90 bears the N6-acetyllysine mark. A DNA-binding region (HMG box 2) is located at residues 95-163; sequence PKRPPSAFFL…KYEKDIAAYR (69 aa). At S100 the chain carries Phosphoserine. C106 carries the post-translational modification Cysteine sulfonic acid (-SO3H). 2 positions are modified to N6-acetyllysine: K114 and K141. The segment covering 162–172 has biased composition (basic and acidic residues); sequence YRAKGKSEVGK. The segment at 162 to 210 is disordered; it reads YRAKGKSEVGKKGPGRPTGSKKKNEPEDEEEEEEEEDDEDEEEEDEDEE. The required for chemotactic activity stretch occupies residues 165-180; that stretch reads KGKSEVGKKGPGRPTG. A compositionally biased stretch (acidic residues) spans 187–210; sequence PEDEEEEEEEEDDEDEEEEDEDEE.

Belongs to the HMGB family. In terms of assembly, interacts with POU2F2, POU2F1 and POU3F1. Component of the RAG complex composed of core components RAG1 and RAG2, and associated component HMGB1 or HMGB2. Component of the SET complex, composed of at least ANP32A, APEX1, HMGB2, NME1, SET and TREX1. Directly interacts with SET. Interacts with LEF1. Reduction/oxidation of cysteine residues Cys-23, Cys-45 and Cys-106 and a possible intramolecular disulfide bond involving Cys-23 and Cys-45 give rise to different redox forms with specific functional activities in various cellular compartments: 1- fully reduced HMGB2 (HMGB2C23hC45hC106h), 2- disulfide HMGB2 (HMGB2C23-C45C106h) and 3- sulfonyl HMGB2 (HMGB2C23soC45soC106so).

It localises to the nucleus. The protein resides in the chromosome. It is found in the cytoplasm. Its subcellular location is the secreted. Multifunctional protein with various roles in different cellular compartments. May act in a redox sensitive manner. In the nucleus is an abundant chromatin-associated non-histone protein involved in transcription, chromatin remodeling and V(D)J recombination and probably other processes. Binds DNA with a preference to non-canonical DNA structures such as single-stranded DNA. Can bent DNA and enhance DNA flexibility by looping thus providing a mechanism to promote activities on various gene promoters by enhancing transcription factor binding and/or bringing distant regulatory sequences into close proximity. Involved in V(D)J recombination by acting as a cofactor of the RAG complex: acts by stimulating cleavage and RAG protein binding at the 23 bp spacer of conserved recombination signal sequences (RSS). Proposed to be involved in the innate immune response to nucleic acids by acting as a cytoplasmic promiscuous immunogenic DNA/RNA sensor which cooperates with subsequent discriminative sensing by specific pattern recognition receptors. In the extracellular compartment acts as a chemokine. Promotes proliferation and migration of endothelial cells implicating AGER/RAGE. Has antimicrobial activity in gastrointestinal epithelial tissues. Involved in inflammatory response to antigenic stimulus coupled with pro-inflammatory activity. May play a role in germ cell differentiation. Involved in modulation of neurogenesis probably by regulation of neural stem proliferation. Involved in articular cartilage surface maintenance implicating LEF1 and the Wnt/beta-catenin pathway. This Rattus norvegicus (Rat) protein is High mobility group protein B2 (Hmgb2).